A 35-amino-acid polypeptide reads, in one-letter code: Manganese peroxidase (35 aa).

Over residues 1–11 the composition is skewed to basic and acidic residues; the sequence is LSLLGHDERVT. The segment at 1-35 is disordered; the sequence is LSLLGHDERVTPEPFDSVTAQNARGNQADVQSLPR. Residues 18 to 35 are compositionally biased toward polar residues; sequence VTAQNARGNQADVQSLPR.

It belongs to the peroxidase family. Heme b is required as a cofactor. It depends on Ca(2+) as a cofactor.

The enzyme catalyses 2 Mn(2+) + H2O2 + 2 H(+) = 2 Mn(3+) + 2 H2O. In terms of biological role, has manganese peroxidase activity. In Irpex lacteus (Milk-white toothed polypore), this protein is Manganese peroxidase.